An 80-amino-acid polypeptide reads, in one-letter code: Conotoxin Bu3 (80 aa).

The first 22 residues, 1-22 (MKLMCVLIVSVLVLTACQLSTA), serve as a signal peptide directing secretion. The propeptide occupies 23–51 (DDTRDKQKDRLVRLFRKKRDSSDSGLLPR). 3 disulfides stabilise this stretch: Cys-53–Cys-69, Cys-60–Cys-72, and Cys-68–Cys-79.

Belongs to the conotoxin O1 superfamily. As to expression, expressed by the venom duct.

The protein localises to the secreted. This is Conotoxin Bu3 from Conus bullatus (Bubble cone).